The chain runs to 154 residues: uncharacterized protein (154 aa).

8 residues coordinate Zn(2+): Cys-4, Cys-7, Cys-16, Cys-19, Cys-24, Cys-28, His-32, and Cys-36. The segment at 4–36 adopts an HIT-type zinc-finger fold; it reads CSICNESEIKYKCPKCSFPYCSLPCWKIHQSQC.

This is an uncharacterized protein from Schizosaccharomyces pombe (strain 972 / ATCC 24843) (Fission yeast).